The primary structure comprises 110 residues: ATP-dependent Clp protease adapter protein ClpS (110 aa).

It belongs to the ClpS family. As to quaternary structure, binds to the N-terminal domain of the chaperone ClpA.

Its function is as follows. Involved in the modulation of the specificity of the ClpAP-mediated ATP-dependent protein degradation. This is ATP-dependent Clp protease adapter protein ClpS from Bartonella quintana (strain Toulouse) (Rochalimaea quintana).